A 139-amino-acid chain; its full sequence is Phosphoribosyl-AMP cyclohydrolase (139 aa).

D95 serves as a coordination point for Mg(2+). Position 96 (C96) interacts with Zn(2+). D97 and D99 together coordinate Mg(2+). C114 and C121 together coordinate Zn(2+).

This sequence belongs to the PRA-CH family. As to quaternary structure, homodimer. Mg(2+) serves as cofactor. Zn(2+) is required as a cofactor.

The protein resides in the cytoplasm. The catalysed reaction is 1-(5-phospho-beta-D-ribosyl)-5'-AMP + H2O = 1-(5-phospho-beta-D-ribosyl)-5-[(5-phospho-beta-D-ribosylamino)methylideneamino]imidazole-4-carboxamide. It participates in amino-acid biosynthesis; L-histidine biosynthesis; L-histidine from 5-phospho-alpha-D-ribose 1-diphosphate: step 3/9. Its function is as follows. Catalyzes the hydrolysis of the adenine ring of phosphoribosyl-AMP. This Chelativorans sp. (strain BNC1) protein is Phosphoribosyl-AMP cyclohydrolase.